A 201-amino-acid chain; its full sequence is MSKRIAGPEIERLIQLLAKVPGLGPRSARRAALHLIKKKEQLLSPLAAAMSEAADKVRICSTCGNVDTADPCMICTDPRRDAGTIIVVEDVSDLWALERAAAMNVRYHVLGGTLSPLDGIGPDQLNIRSLIDRVAGGEVKEIILAVNATVEGQTTAHYLTDQLSGFDIKVTRLAHGVPVGGELDYLDEGTLAAALRSRTAF.

The C4-type zinc-finger motif lies at 60–75; it reads CSTCGNVDTADPCMIC. Positions 83 to 178 constitute a Toprim domain; sequence GTIIVVEDVS…KVTRLAHGVP (96 aa).

Belongs to the RecR family.

In terms of biological role, may play a role in DNA repair. It seems to be involved in an RecBC-independent recombinational process of DNA repair. It may act with RecF and RecO. The sequence is that of Recombination protein RecR from Mesorhizobium japonicum (strain LMG 29417 / CECT 9101 / MAFF 303099) (Mesorhizobium loti (strain MAFF 303099)).